The following is a 789-amino-acid chain: Cell pattern formation-associated protein stuA (789 aa).

Disordered regions lie at residues 50–131 (PALS…NTVG) and 205–224 (PGGVTSSQPGPQPPTTSVSS). Polar residues-rich tracts occupy residues 55–69 (PTASQPPISGQSYRT), 76–88 (ASHNASARTSLSG), and 115–131 (LDSSAPQEFSIPQNTVG). The HTH APSES-type domain maps to 272–378 (RVTATLWEDE…HNIGGLLYHP (107 aa)). The H-T-H motif DNA-binding region spans 306–327 (GTKLLNVAGMTRGRRDGILKSE). 3 disordered regions span residues 389–459 (QESQ…ASSL), 487–543 (SIDT…YAPQ), and 616–789 (HDSA…ARRR). 5 stretches are compositionally biased toward polar residues: residues 419–438 (LQTPVPSHMSQPHAMTSQSA), 487–529 (SIDT…SKSY), 620–636 (GYNTNRGSYTYTTNPSV), 645–667 (QLASDMSGSPSQQNGSGRMTPRT), and 676–713 (SGYNTPPRSAAVSSLYNSVSETRGASANGTTDNYSVAS). Residues 731-758 (KRMREDDDVDQIVRPDSRGAEYESKRRK) form a nuclear localization domain region. Basic and acidic residues predominate over residues 741 to 754 (QIVRPDSRGAEYES).

This sequence belongs to the EFG1/PHD1/stuA family.

It localises to the nucleus. Functionally, transcription factor that regulates asexual reproduction. Binds the StuA-response elements (StRE) with the consensus sequence 5'-(A/T)CGCG(T/A)N(A/C)-3' at the promoters of target genes. This is Cell pattern formation-associated protein stuA from Aspergillus flavus (strain ATCC 200026 / FGSC A1120 / IAM 13836 / NRRL 3357 / JCM 12722 / SRRC 167).